The chain runs to 633 residues: Phosphomethylpyrimidine synthase (633 aa).

The span at 1 to 13 (MNIRSNPDTTLPA) shows a compositional bias: polar residues. Positions 1–20 (MNIRSNPDTTLPAVTTGPLP) are disordered. Substrate contacts are provided by residues asparagine 221, methionine 250, tyrosine 279, histidine 315, 335–337 (SRG), 376–379 (DGLR), and glutamate 415. Histidine 419 is a binding site for Zn(2+). Residue tyrosine 442 coordinates substrate. Histidine 483 contributes to the Zn(2+) binding site. [4Fe-4S] cluster is bound by residues cysteine 563, cysteine 566, and cysteine 571.

This sequence belongs to the ThiC family. In terms of assembly, homodimer. Requires [4Fe-4S] cluster as cofactor.

The catalysed reaction is 5-amino-1-(5-phospho-beta-D-ribosyl)imidazole + S-adenosyl-L-methionine = 4-amino-2-methyl-5-(phosphooxymethyl)pyrimidine + CO + 5'-deoxyadenosine + formate + L-methionine + 3 H(+). The protein operates within cofactor biosynthesis; thiamine diphosphate biosynthesis. In terms of biological role, catalyzes the synthesis of the hydroxymethylpyrimidine phosphate (HMP-P) moiety of thiamine from aminoimidazole ribotide (AIR) in a radical S-adenosyl-L-methionine (SAM)-dependent reaction. The sequence is that of Phosphomethylpyrimidine synthase from Bradyrhizobium sp. (strain ORS 278).